We begin with the raw amino-acid sequence, 270 residues long: Phospholysine phosphohistidine inorganic pyrophosphate phosphatase (270 aa).

Mg(2+)-binding residues include D17 and S19. Residues 17–19 (DIS), 54–55 (TN), and K189 contribute to the substrate site. Position 214 (D214) interacts with Mg(2+).

The protein belongs to the HAD-like hydrolase superfamily. Homodimer. It depends on Mg(2+) as a cofactor.

It localises to the cytoplasm. Its subcellular location is the nucleus. The catalysed reaction is diphosphate + H2O = 2 phosphate + H(+). In terms of biological role, phosphatase that hydrolyzes imidodiphosphate, 3-phosphohistidine and 6-phospholysine. Has broad substrate specificity and can also hydrolyze inorganic diphosphate, but with lower efficiency. The protein is Phospholysine phosphohistidine inorganic pyrophosphate phosphatase (Lhpp) of Mus musculus (Mouse).